We begin with the raw amino-acid sequence, 269 residues long: Tryptophan synthase alpha chain (269 aa).

Residues Glu-49 and Asp-60 each act as proton acceptor in the active site.

It belongs to the TrpA family. As to quaternary structure, tetramer of two alpha and two beta chains.

It carries out the reaction (1S,2R)-1-C-(indol-3-yl)glycerol 3-phosphate + L-serine = D-glyceraldehyde 3-phosphate + L-tryptophan + H2O. It participates in amino-acid biosynthesis; L-tryptophan biosynthesis; L-tryptophan from chorismate: step 5/5. Its function is as follows. The alpha subunit is responsible for the aldol cleavage of indoleglycerol phosphate to indole and glyceraldehyde 3-phosphate. The protein is Tryptophan synthase alpha chain of Ectopseudomonas mendocina (strain ymp) (Pseudomonas mendocina).